Here is a 3432-residue protein sequence, read N- to C-terminus: Hybrid signal transduction histidine kinase G (3432 aa).

Composition is skewed to low complexity over residues 44-68 (HFSNSVLNQTTTTTTTTTTTTTTTN), 76-90 (SQLQAQLQSQSQQNN), and 126-145 (QPQQQQQQQASNKSKLSQKQ). Disordered regions lie at residues 44 to 109 (HFSN…TNSS) and 124 to 240 (DDQP…HNIN). The segment covering 146–157 (TSQLNISGNNSG) has biased composition (polar residues). 2 stretches are compositionally biased toward low complexity: residues 165–177 (TISNSNNSINFIH) and 187–238 (KTPI…NNHN). The Protein kinase domain maps to 263-792 (LSFKHGYNSG…YGLKKDLEMF (530 aa)). Residues 269 to 277 (YNSGLGGNF) and Lys-305 contribute to the ATP site. Residues 399-419 (NNNNNNNNSYNNNYNNNNNNN) show a composition bias toward low complexity. 2 disordered regions span residues 399–426 (NNNNNNNNSYNNNYNNNNNNNGQVTSPI) and 443–542 (FQLN…STPL). Residues 443 to 467 (FQLNSSTNSTGSPLIITSQPMPFQL) are compositionally biased toward polar residues. Over residues 468–479 (NSNSNTTASSSS) the composition is skewed to low complexity. Positions 480–490 (PITHSNLNTAI) are enriched in polar residues. Over residues 491–508 (TSTTTSNSNSNNNSNNNN) the composition is skewed to low complexity. Positions 509 to 525 (SGGGGGGGGGGGGGGGT) are enriched in gly residues. Asp-585 functions as the Proton acceptor; for protein kinase activity in the catalytic mechanism. The AAA stretch occupies residues 863–1121 (GKEFIIVSGL…TMKIVLKNLD (259 aa)). Residue 871 to 878 (GLSGVGKT) coordinates ATP. Disordered stretches follow at residues 1040–1077 (NNFSINNNNNNNNGCNNNNNNNNNNINNNNNNNNNNNI) and 1261–1290 (TTTTNNNTTNNTNNNNTNNNNNNTNGNNSD). The span at 1261–1288 (TTTTNNNTTNNTNNNNTNNNNNNTNGNN) shows a compositional bias: low complexity. Helical transmembrane passes span 1567 to 1587 (VMVIMMPSLYLNNLNVLTLLL) and 1599 to 1619 (ISSWSSTAFAMFGMVVSIGHF). A TPR repeat occupies 1965-1998 (SQLMLAKAEFERINGNFEQAMEYFSEAISLAQQF). Disordered regions lie at residues 2071 to 2095 (EYSNNNNNNNSNNNNNNANQSQASI) and 2299 to 2349 (GYNN…NNNK). Residues 2073–2095 (SNNNNNNNSNNNNNNANQSQASI) show a composition bias toward low complexity. The 251-residue stretch at 2215-2465 (YFDRLLKRLM…SNARLFIKVN (251 aa)) folds into the GAF domain. The Histidine kinase domain maps to 2491–2769 (NMSHEMRTPL…TFHFCVELGK (279 aa)). His-2494 is subject to Phosphohistidine; by autocatalysis. The span at 2637 to 2648 (TTTNNKKQLNTD) shows a compositional bias: low complexity. Disordered regions lie at residues 2637–2673 (TTTNNKKQLNTDNDGDDDDDDDNENLDENNEDTSIDL), 2785–2815 (LLNNNNNNNNNNNNNNNNNNNNNNNNNNNNN), 2917–3030 (LSPK…NNNS), 3134–3160 (NNNINNINNNNNKSNSPIPEDSKHSQY), and 3247–3281 (NSISTTSHSSTSTSSSSSSSSSSSSSLSSTTTITT). The segment covering 2649 to 2673 (NDGDDDDDDDNENLDENNEDTSIDL) has biased composition (acidic residues). Composition is skewed to low complexity over residues 2787-2815 (NNNNNNNNNNNNNNNNNNNNNNNNNNNNN), 2935-3029 (LSSS…HNNN), and 3134-3145 (NNNINNINNNNN). The Response regulatory domain occupies 3305-3424 (KILIVEDNEM…DLRYVINRYG (120 aa)). Position 3356 is a 4-aspartylphosphate (Asp-3356).

The protein belongs to the protein kinase superfamily. Ser/Thr protein kinase family. Post-translationally, activation probably requires transfer of a phosphate group between a histidine in the kinase core (transmitter) domain and an aspartate of the receiver domain.

The protein localises to the membrane. The catalysed reaction is ATP + protein L-histidine = ADP + protein N-phospho-L-histidine.. It carries out the reaction L-seryl-[protein] + ATP = O-phospho-L-seryl-[protein] + ADP + H(+). It catalyses the reaction L-threonyl-[protein] + ATP = O-phospho-L-threonyl-[protein] + ADP + H(+). Its function is as follows. Acts as a receptor histidine kinase for a signal transduction pathway. This protein undergoes an ATP-dependent autophosphorylation at a conserved histidine residue in the kinase core, and a phosphoryl group is then transferred to a conserved aspartate residue in the receiver domain. In Dictyostelium discoideum (Social amoeba), this protein is Hybrid signal transduction histidine kinase G (dhkG).